The sequence spans 69 residues: Bowman-Birk type proteinase inhibitor A2 (69 aa).

4 cysteine pairs are disulfide-bonded: C12–C31, C18–C29, C38–C45, and C42–C59.

This sequence belongs to the Bowman-Birk serine protease inhibitor family. Expressed in bulb (at protein level).

Serine protease inhibitor. This chain is Bowman-Birk type proteinase inhibitor A2, found in Hyacinthus orientalis (Common hyacinth).